The sequence spans 642 residues: Threonine--tRNA ligase (642 aa).

Residues 1 to 61 (MPIITLPDGS…EQDSQLAIIT (61 aa)) form the TGS domain. The tract at residues 243–534 (DHRKIGKQLD…LTEEYAGFFP (292 aa)) is catalytic. Residues C334, H385, and H511 each coordinate Zn(2+).

Belongs to the class-II aminoacyl-tRNA synthetase family. Homodimer. Requires Zn(2+) as cofactor.

It localises to the cytoplasm. It catalyses the reaction tRNA(Thr) + L-threonine + ATP = L-threonyl-tRNA(Thr) + AMP + diphosphate + H(+). Its function is as follows. Catalyzes the attachment of threonine to tRNA(Thr) in a two-step reaction: L-threonine is first activated by ATP to form Thr-AMP and then transferred to the acceptor end of tRNA(Thr). Also edits incorrectly charged L-seryl-tRNA(Thr). The protein is Threonine--tRNA ligase of Proteus mirabilis (strain HI4320).